The primary structure comprises 469 residues: Serine carboxypeptidase-like 41 (469 aa).

The N-terminal stretch at 1–20 (MAIVSLRDVAMVMVTVQVFA) is a signal peptide. Intrachain disulfides connect Cys83/Cys342, Cys243/Cys260, and Cys285/Cys310. N-linked (GlcNAc...) asparagine glycosylation occurs at Asn134. The active site involves Ser175. An N-linked (GlcNAc...) asparagine glycan is attached at Asn255. Asn331 and Asn347 each carry an N-linked (GlcNAc...) asparagine glycan. Residues Asp379 and His436 contribute to the active site. N-linked (GlcNAc...) asparagine glycosylation occurs at Asn461.

The protein belongs to the peptidase S10 family. In terms of tissue distribution, expressed in flowers.

It is found in the secreted. Its function is as follows. Probable carboxypeptidase. In Arabidopsis thaliana (Mouse-ear cress), this protein is Serine carboxypeptidase-like 41 (SCPL41).